We begin with the raw amino-acid sequence, 449 residues long: MYHLWIKCLAAWIFLKRCNGVHAMPAKAPMYPNEPFIVLWNAPTTQCPLRYKVDLDLKTFHIVANANDSLSGSVVAIFYPNHLGVYPHIDERGHFFHGIIPQNESLTKHLNKSKSDINRMIPLKTFHGLGVIDWENWRPQWDRNWGSKNVYRNRSIQFAKKLHPELSEDKIKRLAKKEYEKAAKSFMRDTLLLAEEMRPNGYWGYYLYPDCQNYDYKTKGDQYTGKCPDIEMSRNDQLLWLWRDSTALFPNVYLEIILRSSDNALKFVHHRLKESMRIASMAREDYALPVFVYARPFYAYTFEPLTQEDLVTTVGETAAMGAAGIVFWGSMQYASTVDSCQKVKTYMNGPLGRYIVNVTTAAKICSHALCRKNGRCVRKHSDSNAFLHLFPESFRIMVHANATEKKAIVKGKLELKDLIYLRKNFMCQCYQGWKGLYCEEYSIKDIRKI.

The signal sequence occupies residues 1-23 (MYHLWIKCLAAWIFLKRCNGVHA). 2 disulfide bridges follow: Cys-47/Cys-340 and Cys-211/Cys-227. N-linked (GlcNAc...) asparagine glycosylation is found at Asn-67, Asn-103, and Asn-111. Catalysis depends on Glu-135, which acts as the Proton donor. An N-linked (GlcNAc...) asparagine glycan is attached at Asn-153. Asn-357 is a glycosylation site (N-linked (GlcNAc...) asparagine). 3 disulfides stabilise this stretch: Cys-365–Cys-376, Cys-370–Cys-427, and Cys-429–Cys-438. The N-linked (GlcNAc...) asparagine glycan is linked to Asn-401. The EGF-like domain maps to 427-438 (CQCYQGWKGLYC).

The protein belongs to the glycosyl hydrolase 56 family. As to quaternary structure, monomer. In terms of tissue distribution, expressed by the venom gland.

It is found in the secreted. The enzyme catalyses Random hydrolysis of (1-&gt;4)-linkages between N-acetyl-beta-D-glucosamine and D-glucuronate residues in hyaluronate.. Functionally, snake venom endo-hyaluronidase that degrades hyaluronan to smaller oligosaccharide fragments. In venom, it is not toxic by itself, but increases the diffusion of other venom proteins by degrading the extracellular matrix. In addition, it displays antiedematogenic activity. This is Hyaluronidase-2 from Bitis arietans (African puff adder).